Reading from the N-terminus, the 200-residue chain is NAD(P)H dehydrogenase (quinone) (200 aa).

One can recognise a Flavodoxin-like domain in the interval 4–191; the sequence is LLVLYYSMYG…TIARFQGEHV (188 aa). Residues 10 to 15 and 79 to 81 each bind FMN; these read SMYGHV and TRF. Residue tyrosine 12 participates in NAD(+) binding. Tryptophan 99 is a binding site for substrate. FMN-binding positions include 114-120 and histidine 135; that span reads STASQHG.

This sequence belongs to the WrbA family. FMN serves as cofactor.

The enzyme catalyses a quinone + NADH + H(+) = a quinol + NAD(+). It catalyses the reaction a quinone + NADPH + H(+) = a quinol + NADP(+). The protein is NAD(P)H dehydrogenase (quinone) of Nitrosococcus oceani (strain ATCC 19707 / BCRC 17464 / JCM 30415 / NCIMB 11848 / C-107).